The chain runs to 180 residues: ATP-dependent protease subunit HslV (180 aa).

Residue T5 is part of the active site. The Na(+) site is built by G165, C168, and T171.

The protein belongs to the peptidase T1B family. HslV subfamily. In terms of assembly, a double ring-shaped homohexamer of HslV is capped on each side by a ring-shaped HslU homohexamer. The assembly of the HslU/HslV complex is dependent on binding of ATP.

It localises to the cytoplasm. The enzyme catalyses ATP-dependent cleavage of peptide bonds with broad specificity.. With respect to regulation, allosterically activated by HslU binding. In terms of biological role, protease subunit of a proteasome-like degradation complex believed to be a general protein degrading machinery. This is ATP-dependent protease subunit HslV from Helicobacter pylori (strain J99 / ATCC 700824) (Campylobacter pylori J99).